We begin with the raw amino-acid sequence, 270 residues long: MLTDKKSSPTWSSLLPSETSQYFVFGNWKMNKTFSEAQTFLKDFVSCEILSNPKIITGIIPPFTLLSSCQQIIKNTPIRLGAQTLHEVDSGAFTGEISAPMLKDIGVDFVLIGHSERRHIFHEQNHSLAEKLLAAIRNGIVPVLCIGETLEEQEAGATQDILLEQLTVGLSRLPEHAPFILAYEPVWAIGTGKVANPDLVQEIHAFCRNVVKDLISKDAAERTPILYGGSVKADNTRALTLCPDVNGLLVGGASLSVESFLAIIQQIAVS.

27–29 serves as a coordination point for substrate; the sequence is NWK. H114 serves as the catalytic Electrophile. E184 acts as the Proton acceptor in catalysis. Substrate is bound by residues G190, S230, and 251–252; that span reads GG.

The protein belongs to the triosephosphate isomerase family. In terms of assembly, homodimer.

Its subcellular location is the cytoplasm. The catalysed reaction is D-glyceraldehyde 3-phosphate = dihydroxyacetone phosphate. Its pathway is carbohydrate biosynthesis; gluconeogenesis. It functions in the pathway carbohydrate degradation; glycolysis; D-glyceraldehyde 3-phosphate from glycerone phosphate: step 1/1. In terms of biological role, involved in the gluconeogenesis. Catalyzes stereospecifically the conversion of dihydroxyacetone phosphate (DHAP) to D-glyceraldehyde-3-phosphate (G3P). This chain is Triosephosphate isomerase, found in Chlamydia muridarum (strain MoPn / Nigg).